The chain runs to 188 residues: Large ribosomal subunit protein eL18 (188 aa).

Lysine 119 participates in a covalent cross-link: Glycyl lysine isopeptide (Lys-Gly) (interchain with G-Cter in SUMO2). Serine 130 bears the Phosphoserine mark. Residues 150-188 (RHFGKAPGTPHSHTKPYVRSKGRKFERARGRRASRGYKN) form a disordered region. Residue threonine 158 is modified to Phosphothreonine. Basic residues-rich tracts occupy residues 161–171 (SHTKPYVRSKG) and 178–188 (RGRRASRGYKN). A Glycyl lysine isopeptide (Lys-Gly) (interchain with G-Cter in SUMO2) cross-link involves residue lysine 164.

The protein belongs to the eukaryotic ribosomal protein eL18 family. As to quaternary structure, component of the large ribosomal subunit.

The protein resides in the cytoplasm. Its subcellular location is the cytosol. It localises to the rough endoplasmic reticulum. In terms of biological role, component of the large ribosomal subunit. The ribosome is a large ribonucleoprotein complex responsible for the synthesis of proteins in the cell. The polypeptide is Large ribosomal subunit protein eL18 (RPL18) (Bos taurus (Bovine)).